Here is a 456-residue protein sequence, read N- to C-terminus: MNTMALFGKVILLQFLIGVGFCMLMQDPKRNDTKSTYATCFRSQPQGNEPASPDCVKAFMAYAEDMKNIFHFTKEQINYLWSLERETQSLFHNHRRRKRQAVFLPVRKECRLLSEFERQNLFYTIRSLKMDTSNPNEYDTLANLHRGAVQPHAHDGSNFLGWHRVYLMYYERALRRIRGDVTLCFWDTTMDFNLGMDNWEYTAVFSSDFFGNRRGQVITGPFRDWPLPPGLTESDYLYRNMTRGRGMPFDSRAASSIFYNPNTIIHSTVTWEGFGFDTITNSQGQTRNITIEGEHNNVHNWVGGAMEFLDPAPQDPVFFFHHCYIDYVWERFREKMRRYFRDPTTDYPGHGNETLHDANYPMIGFEWFRNIDGYSDYFIQNVYRYESPTCQACYYSPYTVCGQGNQCIARMNYPGTEIEEGPQVPNSPVVAFSVAGGTMLMSAFNGRGFIATSNSE.

Positions 1–22 are cleaved as a signal peptide; that stretch reads MNTMALFGKVILLQFLIGVGFC. 6 residues coordinate Cu cation: H145, H154, H163, H295, H299, and H322.

The cofactor is Cu(2+). As to expression, prismatic layer of shell (at protein level).

It is found in the secreted. The protein is Tyrosinase-like protein 2 of Margaritifera margaritifera (Freshwater pearl mussel).